A 170-amino-acid polypeptide reads, in one-letter code: MHCPFCRHPDSRVVDSRTTDDGTSIRRRRQCPDCSRRFTTVETCSLMVVKRSGVTEPFSRTKVISGVRKACQGRPVTEDALAKLGQRVEEAVRATGSAELTTHDVGLAILGPLQELDLVAYLRFASVYRAFDSLEDFEAAIVELRAQRPSAEDRGSGETLEVPAPAIAAD.

Residues C3–C34 fold into a zinc finger. Residues L46–D136 form the ATP-cone domain. A disordered region spans residues R148–D170.

It belongs to the NrdR family. Requires Zn(2+) as cofactor.

Functionally, negatively regulates transcription of bacterial ribonucleotide reductase nrd genes and operons by binding to NrdR-boxes. The protein is Transcriptional repressor NrdR of Streptomyces griseus subsp. griseus (strain JCM 4626 / CBS 651.72 / NBRC 13350 / KCC S-0626 / ISP 5235).